Here is a 514-residue protein sequence, read N- to C-terminus: MQSFLLHCPPIRLCMGLACILFLWNAVSGLKGEGKKDKEMALPPATVSGNEGLKKEKNGSFLHAAESVFKEKKMVKGLEVLATTELPARSVDLSTLNLTELVNGMLNRALKDSKQFFSVLSITSYSSFAFHKVSVAIYNISNPKTVDPAKFPTRHCYCLSNRTNDLSDFTALLVDIVGNSTSYLTEIFKSTSILSVTQTNESDCVFICVMVGKSGRNLSDFWEMVEKSPVINYTFTSGVSSVLATTRGTARTSRLTTQSQQSLLRPYSVRWSTQWVSALKSLPWTKTSAPSEKELAESKQMFPELPVGTIGTHSSAPSSSNMTRTPWGTNRYTQAPTVPMPMPLSVDDSTPEGPPWASLPSTSASIEDAQQLRSTGNLLHPTGILTTPSRLAQPSRASGTLMPGTQTTNPTQAPAPRVPQTDGIPAEWPFIPEKEPARDPAAHQVSKCPRPLLQEEAITDTPLPLAMKKLTPCLMELCRFFQQCLCAIQKRDFSSEAISNCYLPEKIRKLITLH.

An N-terminal signal peptide occupies residues 1-29 (MQSFLLHCPPIRLCMGLACILFLWNAVSG). 9 N-linked (GlcNAc...) asparagine glycosylation sites follow: Asn58, Asn97, Asn139, Asn161, Asn179, Asn200, Asn217, Asn232, and Asn321. A disordered region spans residues 379–420 (LHPTGILTTPSRLAQPSRASGTLMPGTQTTNPTQAPAPRVPQ). Positions 384–398 (ILTTPSRLAQPSRAS) are enriched in polar residues. The segment covering 403–415 (PGTQTTNPTQAPA) has biased composition (low complexity).

The protein localises to the secreted. This Mus musculus (Mouse) protein is HERV-H LTR-associating protein 1 homolog (Hhla1).